Here is an 874-residue protein sequence, read N- to C-terminus: Putative disease resistance protein At5g05400 (874 aa).

The stretch at leucine 22 to tryptophan 74 forms a coiled coil. The NB-ARC domain maps to alanine 139–glycine 434. Glycine 182–threonine 189 contributes to the ATP binding site. 7 LRR repeats span residues glutamine 483–lysine 505, alanine 506–proline 527, lysine 528–serine 548, isoleucine 552–tyrosine 574, serine 575–arginine 597, asparagine 598–proline 620, and asparagine 621–isoleucine 642.

This sequence belongs to the disease resistance NB-LRR family.

Functionally, potential disease resistance protein. The sequence is that of Putative disease resistance protein At5g05400 from Arabidopsis thaliana (Mouse-ear cress).